The sequence spans 546 residues: SusD-like protein BACOVA_02651 (546 aa).

A signal peptide spans 1–21 (MRIFMKSKLLVIATTALLFAA). Residue C22 is the site of N-palmitoyl cysteine attachment. Residue C22 is the site of S-diacylglycerol cysteine attachment.

It belongs to the SusD family.

It localises to the cell outer membrane. The protein operates within glucan metabolism; xyloglucan degradation. In terms of biological role, polysaccharide-binding protein present at the surface of the cell. Probably mediates xyloglucan-binding before xyloglucan transport in the periplasm for degradation. This chain is SusD-like protein BACOVA_02651, found in Bacteroides ovatus (strain ATCC 8483 / DSM 1896 / JCM 5824 / BCRC 10623 / CCUG 4943 / NCTC 11153).